A 188-amino-acid chain; its full sequence is dCTP deaminase (188 aa).

Residues 111-116 (KSTYAR), 135-137 (TLE), Gln-156, Tyr-170, and Gln-180 contribute to the dCTP site. Glu-137 (proton donor/acceptor) is an active-site residue.

The protein belongs to the dCTP deaminase family. As to quaternary structure, homotrimer.

It catalyses the reaction dCTP + H2O + H(+) = dUTP + NH4(+). The protein operates within pyrimidine metabolism; dUMP biosynthesis; dUMP from dCTP (dUTP route): step 1/2. In terms of biological role, catalyzes the deamination of dCTP to dUTP. This is dCTP deaminase from Coxiella burnetii (strain CbuK_Q154) (Coxiella burnetii (strain Q154)).